We begin with the raw amino-acid sequence, 607 residues long: Elongation factor 4 (607 aa).

The 183-residue stretch at 11-193 (GKIRNFSIIA…QIVEKVPAPT (183 aa)) folds into the tr-type G domain. Residues 23-28 (DHGKST) and 140-143 (NKID) each bind GTP.

Belongs to the TRAFAC class translation factor GTPase superfamily. Classic translation factor GTPase family. LepA subfamily.

Its subcellular location is the cell membrane. The enzyme catalyses GTP + H2O = GDP + phosphate + H(+). Functionally, required for accurate and efficient protein synthesis under certain stress conditions. May act as a fidelity factor of the translation reaction, by catalyzing a one-codon backward translocation of tRNAs on improperly translocated ribosomes. Back-translocation proceeds from a post-translocation (POST) complex to a pre-translocation (PRE) complex, thus giving elongation factor G a second chance to translocate the tRNAs correctly. Binds to ribosomes in a GTP-dependent manner. The protein is Elongation factor 4 of Streptococcus pneumoniae (strain JJA).